The sequence spans 518 residues: Putative Rieske 2Fe-2S iron-sulfur protein MSMEG_6410/MSMEI_6242 (518 aa).

Lysine 375 is covalently cross-linked (Isoglutamyl lysine isopeptide (Lys-Gln) (interchain with Q-Cter in protein Pup)). Residues 431–518 form the Rieske domain; it reads LYTFFKCLTD…KGHELRCQKL (88 aa). Positions 471, 473, 491, and 494 each coordinate [2Fe-2S] cluster.

Requires [2Fe-2S] cluster as cofactor.

The chain is Putative Rieske 2Fe-2S iron-sulfur protein MSMEG_6410/MSMEI_6242 from Mycolicibacterium smegmatis (strain ATCC 700084 / mc(2)155) (Mycobacterium smegmatis).